Consider the following 393-residue polypeptide: N-acyl-phosphatidylethanolamine-hydrolyzing phospholipase D (393 aa).

The residue at position 1 (Met-1) is an N-acetylmethionine. Polar residues predominate over residues 1–16 (MDENESNQSLMTSSQY). Residues 1-40 (MDENESNQSLMTSSQYPKEAVRKRQNSARNSGGSDSSRFS) are disordered. Positions 185 and 187 each coordinate Zn(2+). An an N-acyl-1,2-diacyl-sn-glycero-3-phosphoethanolamine-binding site is contributed by Tyr-188. 3 residues coordinate Zn(2+): Asp-189, His-190, and His-253. 2 residues coordinate deoxycholate: Lys-256 and Met-260. Asp-284 provides a ligand contact to Zn(2+). Residue His-321 participates in an N-acyl-1,2-diacyl-sn-glycero-3-phosphoethanolamine binding. Residue His-343 coordinates Zn(2+). Ala-348 contributes to the deoxycholate binding site.

This sequence belongs to the NAPE-PLD family. As to quaternary structure, homodimer. Bile acids promote the assembly of inactive monomers into an active dimer and enable catalysis. Requires Zn(2+) as cofactor. In terms of tissue distribution, widely expressed. Highest expression in brain, kidney and testis (at protein level). Expressed in adipose tissue (at protein level).

The protein resides in the golgi apparatus membrane. The protein localises to the early endosome membrane. Its subcellular location is the nucleus envelope. It localises to the nucleus. It is found in the nucleoplasm. The catalysed reaction is an N-acyl-1,2-diacyl-sn-glycero-3-phosphoethanolamine + H2O = an N-acylethanolamine + a 1,2-diacyl-sn-glycero-3-phosphate + H(+). It carries out the reaction N-butanoyl-1-hexadecanoyl-2-(9Z,12Z-octadecadienoyl)-sn-glycero-3-phosphoethanolamine + H2O = N-butanoyl ethanolamine + 1-hexadecanoyl-2-(9Z,12Z-octadecadienoyl)-sn-glycero-3-phosphate + H(+). The enzyme catalyses N-hexanoyl-1-hexadecanoyl-2-(9Z,12Z-octadecadienoyl)-sn-glycero-3-phosphoethanolamine + H2O = N-hexanoyl ethanolamine + 1-hexadecanoyl-2-(9Z,12Z-octadecadienoyl)-sn-glycero-3-phosphate + H(+). It catalyses the reaction N-octanoyl-1-hexadecanoyl-2-(9Z,12Z-octadecadienoyl)-sn-glycero-3-phosphoethanolamine + H2O = N-octanoyl ethanolamine + 1-hexadecanoyl-2-(9Z,12Z-octadecadienoyl)-sn-glycero-3-phosphate + H(+). The catalysed reaction is N-decanoyl-1-hexadecanoyl-2-(9Z,12Z-octadecadienoyl)-sn-glycero-3-phosphoethanolamine + H2O = N-decanoyl ethanolamine + 1-hexadecanoyl-2-(9Z,12Z-octadecadienoyl)-sn-glycero-3-phosphate + H(+). It carries out the reaction N-dodecanoyl-1,2-di-(9Z-octadecenoyl)-sn-glycero-3-phosphoethanolamine + H2O = N-dodecanoylethanolamine + 1,2-di-(9Z-octadecenoyl)-sn-glycero-3-phosphate + H(+). The enzyme catalyses N-tetradecanoyl-1,2-di-(9Z-octadecenoyl)-sn-glycero-3-phosphoethanolamine + H2O = N-tetradecanoylethanolamine + 1,2-di-(9Z-octadecenoyl)-sn-glycero-3-phosphate + H(+). It catalyses the reaction N-hexadecanoyl-1,2-di-(9Z-octadecenoyl)-sn-glycero-3-phosphoethanolamine + H2O = N-hexadecanoylethanolamine + 1,2-di-(9Z-octadecenoyl)-sn-glycero-3-phosphate + H(+). The catalysed reaction is N,1-dihexadecanoyl-2-(9Z,12Z-octadecadienoyl)-sn-glycero-3-phosphoethanolamine + H2O = 1-hexadecanoyl-2-(9Z,12Z-octadecadienoyl)-sn-glycero-3-phosphate + N-hexadecanoylethanolamine + H(+). It carries out the reaction N-octadecanoyl-1,2-di-(9Z-octadecenoyl)-sn-glycero-3-phosphoethanolamine + H2O = N-octadecanoyl ethanolamine + 1,2-di-(9Z-octadecenoyl)-sn-glycero-3-phosphate + H(+). The enzyme catalyses N,1,2-tri-(9Z-octadecenoyl)-sn-glycero-3-phosphoethanolamine + H2O = N-(9Z-octadecenoyl) ethanolamine + 1,2-di-(9Z-octadecenoyl)-sn-glycero-3-phosphate + H(+). It catalyses the reaction N-(5Z,8Z,11Z,14Z-eicosatetraenoyl)-1,2-diacyl-sn-glycero-3-phosphoethanolamine + H2O = N-(5Z,8Z,11Z,14Z-eicosatetraenoyl)-ethanolamine + a 1,2-diacyl-sn-glycero-3-phosphate + H(+). The catalysed reaction is N-(5Z,8Z,11Z,14Z-eicosatetraenoyl)-1,2-di-(9Z-octadecenoyl)-sn-glycero-3-phosphoethanolamine + H2O = N-(5Z,8Z,11Z,14Z-eicosatetraenoyl)-ethanolamine + 1,2-di-(9Z-octadecenoyl)-sn-glycero-3-phosphate + H(+). It carries out the reaction 1-O-(1Z-octadecenoyl)-2-(9Z-octadecenoyl)-sn-glycero-3-phospho-N-hexadecanoyl-ethanolamine + H2O = 1-O-(1Z-octadecenoyl)-2-(9Z-octadecenoyl)-sn-glycero-3-phosphate + N-hexadecanoylethanolamine + H(+). The enzyme catalyses N,1-diacyl-sn-glycero-3-phosphoethanolamine + H2O = an N-acylethanolamine + a 1-acyl-sn-glycero-3-phosphate + H(+). It catalyses the reaction N,1-dihexadecanoyl-sn-glycero-3-phosphoethanolamine + H2O = N-hexadecanoylethanolamine + 1-hexadecanoyl-sn-glycero-3-phosphate + H(+). The catalysed reaction is N-(5Z,8Z,11Z,14Z-eicosatetraenoyl)-1-(9Z-octadecenoyl)-sn-glycero-3-phosphoethanolamine + H2O = N-(5Z,8Z,11Z,14Z-eicosatetraenoyl)-ethanolamine + 1-(9Z-octadecenoyl)-sn-glycero-3-phosphate + H(+). Its activity is regulated as follows. Activated by divalent cations. Activated by bile acids. D-type phospholipase that hydrolyzes N-acyl-phosphatidylethanolamines (NAPEs) to produce bioactive N-acylethanolamines/fatty acid ethanolamides (NAEs/FAEs) and phosphatidic acid. Cleaves the terminal phosphodiester bond of diacyl- and alkenylacyl-NAPEs, primarily playing a role in the generation of long-chain saturated and monounsaturated NAEs in the brain. May control NAPE homeostasis in dopaminergic neuron membranes and regulate neuron survival, partly through RAC1 activation. As a regulator of lipid metabolism in the adipose tissue, mediates the crosstalk between adipocytes, gut microbiota and immune cells to control body temperature and weight. In particular, regulates energy homeostasis by promoting cold-induced brown or beige adipocyte differentiation program to generate heat from fatty acids and glucose. Has limited D-type phospholipase activity toward N-acyl lyso-NAPEs. This chain is N-acyl-phosphatidylethanolamine-hydrolyzing phospholipase D (NAPEPLD), found in Pongo abelii (Sumatran orangutan).